The following is a 452-amino-acid chain: Tryptophan biosynthesis protein TrpCF (452 aa).

An indole-3-glycerol phosphate synthase region spans residues Met-1–Glu-256. The N-(5'-phosphoribosyl)anthranilate isomerase stretch occupies residues Asn-257–Tyr-452.

This sequence in the N-terminal section; belongs to the TrpC family. The protein in the C-terminal section; belongs to the TrpF family. In terms of assembly, monomer.

It carries out the reaction N-(5-phospho-beta-D-ribosyl)anthranilate = 1-(2-carboxyphenylamino)-1-deoxy-D-ribulose 5-phosphate. It catalyses the reaction 1-(2-carboxyphenylamino)-1-deoxy-D-ribulose 5-phosphate + H(+) = (1S,2R)-1-C-(indol-3-yl)glycerol 3-phosphate + CO2 + H2O. The protein operates within amino-acid biosynthesis; L-tryptophan biosynthesis; L-tryptophan from chorismate: step 3/5. It participates in amino-acid biosynthesis; L-tryptophan biosynthesis; L-tryptophan from chorismate: step 4/5. Functionally, bifunctional enzyme that catalyzes two sequential steps of tryptophan biosynthetic pathway. The first reaction is catalyzed by the isomerase, coded by the TrpF domain; the second reaction is catalyzed by the synthase, coded by the TrpC domain. In Salmonella typhimurium (strain LT2 / SGSC1412 / ATCC 700720), this protein is Tryptophan biosynthesis protein TrpCF (trpC).